The sequence spans 344 residues: MTADISLRPADHPAVRFGKVGVLLVNLGTPDGTDYTSMRRYLREFLTDRRVIEWSPWKWYPILFGIVLNTRPQKVGKAYELIWNKEQNESYLRTYTRNQSELMAGRLKDLDNVKVDWAMRYGTPSIGSRIDALKEEGCDRIVLFPLYPQYAAATTATVNDKAFQKLLSMRWQPALRTVPAYHDDETYIEALAASVERHLSTLDWKPEMLLASFHGIPMSYFKQGDPYYCQCQKTGRLLRERLGLTKENFLVTFQSRFGPEEWLQPYTDKTVEKLAKDGVKRIAVINPGFVSDCLETLEEIAEQAAHSFHENGGEKFAHIPCLNDGEDGMKVLEKVVRRELQGWV.

Residues histidine 214 and glutamate 295 each coordinate Fe cation.

This sequence belongs to the ferrochelatase family.

The protein resides in the cytoplasm. The catalysed reaction is heme b + 2 H(+) = protoporphyrin IX + Fe(2+). The protein operates within porphyrin-containing compound metabolism; protoheme biosynthesis; protoheme from protoporphyrin-IX: step 1/1. Functionally, catalyzes the ferrous insertion into protoporphyrin IX. This chain is Ferrochelatase, found in Rhizobium johnstonii (strain DSM 114642 / LMG 32736 / 3841) (Rhizobium leguminosarum bv. viciae).